Here is a 277-residue protein sequence, read N- to C-terminus: Carbonyl reductase [NADPH] 1 (277 aa).

NADP(+) contacts are provided by residues 10 to 34 (VTGS…GEVV), 63 to 64 (DI), and N90. The residue at position 30 (S30) is a Phosphoserine. Residues 95–97 (FKV) and Q106 contribute to the glutathione site. S140 serves as a coordination point for substrate. Position 193–194 (193–194 (AY)) interacts with glutathione. Catalysis depends on Y194, which acts as the Proton acceptor. NADP(+) is bound by residues 194–198 (YGVTK) and 231–233 (VRT).

It belongs to the short-chain dehydrogenases/reductases (SDR) family. In terms of assembly, monomer.

It is found in the cytoplasm. The catalysed reaction is a secondary alcohol + NADP(+) = a ketone + NADPH + H(+). It catalyses the reaction prostaglandin F2alpha + NADP(+) = prostaglandin E2 + NADPH + H(+). It carries out the reaction prostaglandin E1 + NADP(+) = 15-oxoprostaglandin E1 + NADPH + H(+). The enzyme catalyses prostaglandin D2 + NADP(+) = 15-oxoprostaglandin D2 + NADPH + H(+). The catalysed reaction is menadione + NADPH + H(+) = menadiol + NADP(+). It catalyses the reaction prostaglandin E2 + NADP(+) = 15-oxoprostaglandin E2 + NADPH + H(+). It carries out the reaction prostaglandin F2alpha + NADP(+) = 15-oxoprostaglandin F2alpha + NADPH + H(+). The enzyme catalyses daunorubicin + NADPH + H(+) = 13-dihydrodaunorubicin + NADP(+). The catalysed reaction is S-nitrosoglutathione + NADPH + H(+) = S-(hydroxysulfenamide)glutathione + NADP(+). It catalyses the reaction a primary alcohol + NADP(+) = an aldehyde + NADPH + H(+). It carries out the reaction cortisol + NADPH + H(+) = 20beta-dihydrocortisol + NADP(+). The enzyme catalyses corticosterone + NADPH + H(+) = 20beta-dihydrocorticosterone + NADP(+). Functionally, NADPH-dependent reductase with broad substrate specificity. Catalyzes the reduction of a wide variety of carbonyl compounds including quinones, prostaglandins, menadione, plus various xenobiotics. Catalyzes the reduction of the antitumor anthracyclines doxorubicin and daunorubicin to the cardiotoxic compounds doxorubicinol and daunorubicinol. Can convert prostaglandin E to prostaglandin F2-alpha. Can bind glutathione, which explains its higher affinity for glutathione-conjugated substrates. Catalyzes the reduction of S-nitrosoglutathione. In addition, participates in the glucocorticoid metabolism by catalyzing the NADPH-dependent cortisol/corticosterone into 20beta-dihydrocortisol (20b-DHF) or 20beta-corticosterone (20b-DHB), which are weak agonists of NR3C1 and NR3C2 in adipose tissue. The protein is Carbonyl reductase [NADPH] 1 of Macaca fascicularis (Crab-eating macaque).